Consider the following 379-residue polypeptide: uncharacterized protein (379 aa).

Gly-29 to Thr-36 contacts ATP.

It belongs to the archaeal ATPase family.

This is an uncharacterized protein from Methanocaldococcus jannaschii (strain ATCC 43067 / DSM 2661 / JAL-1 / JCM 10045 / NBRC 100440) (Methanococcus jannaschii).